The following is a 471-amino-acid chain: Serine hydroxymethyltransferase, cytosolic (471 aa).

Residue lysine 249 is modified to N6-(pyridoxal phosphate)lysine.

It belongs to the SHMT family. Pyridoxal 5'-phosphate serves as cofactor.

The protein resides in the cytoplasm. Its subcellular location is the cytosol. The enzyme catalyses (6R)-5,10-methylene-5,6,7,8-tetrahydrofolate + glycine + H2O = (6S)-5,6,7,8-tetrahydrofolate + L-serine. It participates in one-carbon metabolism; tetrahydrofolate interconversion. In terms of biological role, catalyzes the interconversion of serine and glycine. Essential for viability and required for virulence in a murine model of established pulmonary infection. In Aspergillus fumigatus (strain ATCC MYA-4609 / CBS 101355 / FGSC A1100 / Af293) (Neosartorya fumigata), this protein is Serine hydroxymethyltransferase, cytosolic.